Here is a 382-residue protein sequence, read N- to C-terminus: Dual-specificity RNA methyltransferase RlmN (382 aa).

Catalysis depends on glutamate 96, which acts as the Proton acceptor. The region spanning 102–342 (QGKRGTLCVS…VRTTRGEDID (241 aa)) is the Radical SAM core domain. Residues cysteine 109 and cysteine 345 are joined by a disulfide bond. Positions 116, 120, and 123 each coordinate [4Fe-4S] cluster. S-adenosyl-L-methionine contacts are provided by residues 170-171 (GE), serine 202, 224-226 (SLH), and asparagine 302. The active-site S-methylcysteine intermediate is the cysteine 345.

Belongs to the radical SAM superfamily. RlmN family. [4Fe-4S] cluster is required as a cofactor.

The protein localises to the cytoplasm. The catalysed reaction is adenosine(2503) in 23S rRNA + 2 reduced [2Fe-2S]-[ferredoxin] + 2 S-adenosyl-L-methionine = 2-methyladenosine(2503) in 23S rRNA + 5'-deoxyadenosine + L-methionine + 2 oxidized [2Fe-2S]-[ferredoxin] + S-adenosyl-L-homocysteine. It catalyses the reaction adenosine(37) in tRNA + 2 reduced [2Fe-2S]-[ferredoxin] + 2 S-adenosyl-L-methionine = 2-methyladenosine(37) in tRNA + 5'-deoxyadenosine + L-methionine + 2 oxidized [2Fe-2S]-[ferredoxin] + S-adenosyl-L-homocysteine. Specifically methylates position 2 of adenine 2503 in 23S rRNA and position 2 of adenine 37 in tRNAs. m2A2503 modification seems to play a crucial role in the proofreading step occurring at the peptidyl transferase center and thus would serve to optimize ribosomal fidelity. This Pseudomonas fluorescens (strain ATCC BAA-477 / NRRL B-23932 / Pf-5) protein is Dual-specificity RNA methyltransferase RlmN.